A 374-amino-acid chain; its full sequence is MDARRARQKDCRAKKNFKKFRYVKLISMETPSSSDDSCDSFASDNFANTRLQANREGCRTRSQCTRSGPLRVAMKFPPRSTRGAANKRTVPPEPPENSVTDSNSDSEDESGMNFLEKRALNIKQNKAMLAKLMSELESFPGSFPGRRSLPGPSSRPKTPRRRTFPGVACRRNPERRARPLTRSRSRVLGSLSALPTEEEEEEEEEEDKYMLVRKRKSMVGYMNEDDMPRSRRPGPMTLPHVVRPVDEITEEELENICNNSREKIYNRSLGSTCHQCRQKTIDTKTNCRNPECWGVRGQFCGPCLRNRYGEEVKDALLDPNWHCPPCRGICNCSFCRQRDGRCATGVLVYLAKYHGFGNVHAYLKSLKQEFEMQG.

Disordered regions lie at residues 53-110 (ANRE…EDES) and 138-208 (SFPG…EEDK). Ser142 is modified (phosphoserine). The interaction with MYC stretch occupies residues 146-170 (RRSLPGPSSRPKTPRRRTFPGVACR). Positions 160–176 (RRRTFPGVACRRNPERR) match the Nuclear localization signal motif. Thr163 is modified (phosphothreonine). Ser190 bears the Phosphoserine mark. Thr196 carries the phosphothreonine modification. The segment covering 196 to 207 (TEEEEEEEEEED) has biased composition (acidic residues). A Glycyl lysine isopeptide (Lys-Gly) (interchain with G-Cter in SUMO2) cross-link involves residue Lys208. The residue at position 217 (Ser217) is a Phosphoserine. Residues 250–374 (EEELENICNN…SLKQEFEMQG (125 aa)) are mediates transcriptional activity.

Interacts with MYC (via C-terminus), YWHAE and YWHAZ. In terms of processing, phosphorylation at Thr-163 promotes interaction with YWHAE and YWHAZ, dissociation from MYC and sequestration in the cytoplasm.

It localises to the nucleus. The protein localises to the cytoplasm. Its function is as follows. Participates in MYC-mediated cell transformation and apoptosis; induces anchorage-independent growth and clonogenicity in lymphoblastoid cells. Insufficient to induce tumorigenicity when overexpressed but contributes to MYC-mediated tumorigenesis. May play a role as transcriptional regulator. This Bos taurus (Bovine) protein is Cell division cycle-associated protein 7 (CDCA7).